Reading from the N-terminus, the 135-residue chain is Large ribosomal subunit protein uL16c (135 aa).

Basic residues predominate over residues 1-17; that stretch reads MLSPKRTRFRKQHRGRM. A disordered region spans residues 1–21; that stretch reads MLSPKRTRFRKQHRGRMKGVS.

The protein belongs to the universal ribosomal protein uL16 family. In terms of assembly, part of the 50S ribosomal subunit.

The protein localises to the plastid. It localises to the chloroplast. The chain is Large ribosomal subunit protein uL16c from Amborella trichopoda.